We begin with the raw amino-acid sequence, 157 residues long: Crossover junction endodeoxyribonuclease RuvC (157 aa).

Residues Asp-7, Glu-66, and Asp-139 contribute to the active site. Mg(2+)-binding residues include Asp-7, Glu-66, and Asp-139.

This sequence belongs to the RuvC family. Homodimer which binds Holliday junction (HJ) DNA. The HJ becomes 2-fold symmetrical on binding to RuvC with unstacked arms; it has a different conformation from HJ DNA in complex with RuvA. In the full resolvosome a probable DNA-RuvA(4)-RuvB(12)-RuvC(2) complex forms which resolves the HJ. It depends on Mg(2+) as a cofactor.

The protein resides in the cytoplasm. The catalysed reaction is Endonucleolytic cleavage at a junction such as a reciprocal single-stranded crossover between two homologous DNA duplexes (Holliday junction).. In terms of biological role, the RuvA-RuvB-RuvC complex processes Holliday junction (HJ) DNA during genetic recombination and DNA repair. Endonuclease that resolves HJ intermediates. Cleaves cruciform DNA by making single-stranded nicks across the HJ at symmetrical positions within the homologous arms, yielding a 5'-phosphate and a 3'-hydroxyl group; requires a central core of homology in the junction. The consensus cleavage sequence is 5'-(A/T)TT(C/G)-3'. Cleavage occurs on the 3'-side of the TT dinucleotide at the point of strand exchange. HJ branch migration catalyzed by RuvA-RuvB allows RuvC to scan DNA until it finds its consensus sequence, where it cleaves and resolves the cruciform DNA. This is Crossover junction endodeoxyribonuclease RuvC from Campylobacter concisus (strain 13826).